The sequence spans 167 residues: Putative peroxiredoxin-B (167 aa).

The region spanning Ile4–Leu167 is the Thioredoxin domain. Cys53 serves as the catalytic Cysteine sulfenic acid (-SOH) intermediate. Positions Ala165–Leu167 match the Microbody targeting signal motif.

This sequence belongs to the peroxiredoxin family. Prx5 subfamily.

The protein resides in the peroxisome membrane. It catalyses the reaction a hydroperoxide + [thioredoxin]-dithiol = an alcohol + [thioredoxin]-disulfide + H2O. Its function is as follows. Thiol-specific peroxidase that catalyzes the reduction of hydrogen peroxide and organic hydroperoxides to water and alcohols, respectively. Plays a role in cell protection against oxidative stress by detoxifying peroxides and as sensor of hydrogen peroxide-mediated signaling events. This Candida boidinii (Yeast) protein is Putative peroxiredoxin-B (PMPB).